The sequence spans 307 residues: Serine/threonine-protein phosphatase PP2A-1 catalytic subunit (307 aa).

D54, H56, D82, and N114 together coordinate Mn(2+). The active-site Proton donor is H115. Mn(2+) contacts are provided by H164 and H238. A disordered region spans residues 286–307 (FEPAPRRGAEGEVNRRTPDYFL). Residues 289 to 307 (APRRGAEGEVNRRTPDYFL) are compositionally biased toward basic and acidic residues.

It belongs to the PPP phosphatase family. PP-2A subfamily. Mn(2+) serves as cofactor.

It carries out the reaction O-phospho-L-seryl-[protein] + H2O = L-seryl-[protein] + phosphate. The enzyme catalyses O-phospho-L-threonyl-[protein] + H2O = L-threonyl-[protein] + phosphate. In Acetabularia peniculus (Green alga), this protein is Serine/threonine-protein phosphatase PP2A-1 catalytic subunit.